The primary structure comprises 261 residues: GTP cyclohydrolase FolE2 (261 aa).

The protein belongs to the GTP cyclohydrolase IV family.

It carries out the reaction GTP + H2O = 7,8-dihydroneopterin 3'-triphosphate + formate + H(+). Its pathway is cofactor biosynthesis; 7,8-dihydroneopterin triphosphate biosynthesis; 7,8-dihydroneopterin triphosphate from GTP: step 1/1. Functionally, converts GTP to 7,8-dihydroneopterin triphosphate. The sequence is that of GTP cyclohydrolase FolE2 from Fervidobacterium nodosum (strain ATCC 35602 / DSM 5306 / Rt17-B1).